Here is a 155-residue protein sequence, read N- to C-terminus: Lectin-like protein EP153R (155 aa).

Topologically, residues 1–30 (MYFKKKYIGLIDKNCEKKILDDCTTIKICY) are cytoplasmic. A helical membrane pass occupies residues 31–51 (ILIGILIGTNMITLIYNFIFW). Residues 52 to 155 (DHYMTCNKKD…YLPLLFICSK (104 aa)) are Extracellular-facing. Cysteines 66 and 77 form a disulfide. The lectin-like stretch occupies residues 66–154 (CPKDWVGYNN…KYLPLLFICS (89 aa)). N82, N86, N98, N104, N110, N124, N130, and N137 each carry an N-linked (GlcNAc...) asparagine; by host glycan. C94 and C153 are oxidised to a cystine.

Belongs to the asfivirus lectin-like protein family. Homodimer.

It is found in the host endoplasmic reticulum membrane. Its function is as follows. Down-regulates MHC-I expression by impairing the appropriate configuration or presentation into the plasma membrane of the latter. Participates in viral hemadsorption, which may help viral spread. Reduces the transactivating activity of host TP53, thus inhibiting apoptosis. Non-essential for virus growth in swine macrophage cell cultures. The protein is Lectin-like protein EP153R of Ornithodoros (relapsing fever ticks).